A 300-amino-acid chain; its full sequence is Ribosomal protein L11 methyltransferase (300 aa).

Residues Thr141, Gly164, Asp186, and Asn233 each contribute to the S-adenosyl-L-methionine site.

Belongs to the methyltransferase superfamily. PrmA family.

It localises to the cytoplasm. The enzyme catalyses L-lysyl-[protein] + 3 S-adenosyl-L-methionine = N(6),N(6),N(6)-trimethyl-L-lysyl-[protein] + 3 S-adenosyl-L-homocysteine + 3 H(+). Its function is as follows. Methylates ribosomal protein L11. This is Ribosomal protein L11 methyltransferase from Synechocystis sp. (strain ATCC 27184 / PCC 6803 / Kazusa).